A 158-amino-acid polypeptide reads, in one-letter code: SsrA-binding protein (158 aa).

Positions 133 to 158 are disordered; it reads KIHDKRETEAKRDWNRQKQRLLKDNA. Residues 136 to 158 are compositionally biased toward basic and acidic residues; that stretch reads DKRETEAKRDWNRQKQRLLKDNA.

Belongs to the SmpB family.

The protein resides in the cytoplasm. Functionally, required for rescue of stalled ribosomes mediated by trans-translation. Binds to transfer-messenger RNA (tmRNA), required for stable association of tmRNA with ribosomes. tmRNA and SmpB together mimic tRNA shape, replacing the anticodon stem-loop with SmpB. tmRNA is encoded by the ssrA gene; the 2 termini fold to resemble tRNA(Ala) and it encodes a 'tag peptide', a short internal open reading frame. During trans-translation Ala-aminoacylated tmRNA acts like a tRNA, entering the A-site of stalled ribosomes, displacing the stalled mRNA. The ribosome then switches to translate the ORF on the tmRNA; the nascent peptide is terminated with the 'tag peptide' encoded by the tmRNA and targeted for degradation. The ribosome is freed to recommence translation, which seems to be the essential function of trans-translation. The protein is SsrA-binding protein of Ruegeria pomeroyi (strain ATCC 700808 / DSM 15171 / DSS-3) (Silicibacter pomeroyi).